The sequence spans 366 residues: GDSL esterase/lipase LTL1 (366 aa).

Positions 1-27 (MNINCSPLGFLISLFFIVTFLAPQVKS) are cleaved as a signal peptide. Serine 36 functions as the Nucleophile in the catalytic mechanism. A glycan (N-linked (GlcNAc...) asparagine) is linked at asparagine 117. Residues aspartate 326 and histidine 329 contribute to the active site. Asparagine 354 carries N-linked (GlcNAc...) asparagine glycosylation.

This sequence belongs to the 'GDSL' lipolytic enzyme family. As to quaternary structure, binds to VLG at the endomembrane system. Mostly expressed in flowers, reproductive stems and rosette leaves, and, to a lower extent, in roots.

Its subcellular location is the secreted. Involved in the mechanisms of salt tolerance. Mediates resistance to LiCl and NaCl. This Arabidopsis thaliana (Mouse-ear cress) protein is GDSL esterase/lipase LTL1.